We begin with the raw amino-acid sequence, 287 residues long: 4-diphosphocytidyl-2-C-methyl-D-erythritol kinase (287 aa).

Lys-12 is a catalytic residue. 97–107 (PMGGGLGGGSS) contributes to the ATP binding site. The active site involves Asp-139.

Belongs to the GHMP kinase family. IspE subfamily.

It carries out the reaction 4-CDP-2-C-methyl-D-erythritol + ATP = 4-CDP-2-C-methyl-D-erythritol 2-phosphate + ADP + H(+). Its pathway is isoprenoid biosynthesis; isopentenyl diphosphate biosynthesis via DXP pathway; isopentenyl diphosphate from 1-deoxy-D-xylulose 5-phosphate: step 3/6. In terms of biological role, catalyzes the phosphorylation of the position 2 hydroxy group of 4-diphosphocytidyl-2C-methyl-D-erythritol. This is 4-diphosphocytidyl-2-C-methyl-D-erythritol kinase from Marinobacter nauticus (strain ATCC 700491 / DSM 11845 / VT8) (Marinobacter aquaeolei).